The sequence spans 111 residues: Nucleoid-associated protein Clim_0875 (111 aa).

It belongs to the YbaB/EbfC family. In terms of assembly, homodimer.

The protein resides in the cytoplasm. The protein localises to the nucleoid. Its function is as follows. Binds to DNA and alters its conformation. May be involved in regulation of gene expression, nucleoid organization and DNA protection. The chain is Nucleoid-associated protein Clim_0875 from Chlorobium limicola (strain DSM 245 / NBRC 103803 / 6330).